The chain runs to 1171 residues: DNA-directed RNA polymerase subunit beta (1171 aa).

It belongs to the RNA polymerase beta chain family. The RNAP catalytic core consists of 2 alpha, 1 beta, 1 beta' and 1 omega subunit. When a sigma factor is associated with the core the holoenzyme is formed, which can initiate transcription.

The catalysed reaction is RNA(n) + a ribonucleoside 5'-triphosphate = RNA(n+1) + diphosphate. Its function is as follows. DNA-dependent RNA polymerase catalyzes the transcription of DNA into RNA using the four ribonucleoside triphosphates as substrates. In Arthrobacter sp. (strain FB24), this protein is DNA-directed RNA polymerase subunit beta.